Reading from the N-terminus, the 273-residue chain is Ribosomal RNA small subunit methyltransferase A (273 aa).

Asparagine 18, leucine 20, glycine 45, glutamate 66, aspartate 91, and asparagine 113 together coordinate S-adenosyl-L-methionine.

Belongs to the class I-like SAM-binding methyltransferase superfamily. rRNA adenine N(6)-methyltransferase family. RsmA subfamily.

The protein localises to the cytoplasm. The enzyme catalyses adenosine(1518)/adenosine(1519) in 16S rRNA + 4 S-adenosyl-L-methionine = N(6)-dimethyladenosine(1518)/N(6)-dimethyladenosine(1519) in 16S rRNA + 4 S-adenosyl-L-homocysteine + 4 H(+). Functionally, specifically dimethylates two adjacent adenosines (A1518 and A1519) in the loop of a conserved hairpin near the 3'-end of 16S rRNA in the 30S particle. May play a critical role in biogenesis of 30S subunits. In Citrobacter koseri (strain ATCC BAA-895 / CDC 4225-83 / SGSC4696), this protein is Ribosomal RNA small subunit methyltransferase A.